A 721-amino-acid polypeptide reads, in one-letter code: Polyribonucleotide nucleotidyltransferase (721 aa).

The Mg(2+) site is built by D495 and D501. The 60-residue stretch at 562–621 folds into the KH domain; sequence PRLLSFRIDPELIGTVIGPGGRTIKGITERTNTKIDIEDSGIVTIASHDGAAADEAQKII. Positions 631 to 699 constitute an S1 motif domain; the sequence is GEVFSGSITR…NRGRINLTLR (69 aa). The segment at 698–721 is disordered; it reads LRGVPQSGDGAGEEPQPTPVAPLS.

The protein belongs to the polyribonucleotide nucleotidyltransferase family. Mg(2+) serves as cofactor.

It localises to the cytoplasm. It carries out the reaction RNA(n+1) + phosphate = RNA(n) + a ribonucleoside 5'-diphosphate. Involved in mRNA degradation. Catalyzes the phosphorolysis of single-stranded polyribonucleotides processively in the 3'- to 5'-direction. This chain is Polyribonucleotide nucleotidyltransferase, found in Parasynechococcus marenigrum (strain WH8102).